Consider the following 550-residue polypeptide: Mitochondrial distribution and morphology protein 34 (550 aa).

Residues 1 to 208 (MAFNFNWSPL…CPEQMSKEDH (208 aa)) enclose the SMP-LTD domain. Disordered stretches follow at residues 294 to 313 (VDKP…LVKS), 358 to 505 (RNAK…ILEQ), and 519 to 550 (VYDE…TAAS). Over residues 300–310 (SSTTPLTTPSL) the composition is skewed to low complexity. The span at 364–376 (ANRKKKTRVVNLR) shows a compositional bias: basic residues. Composition is skewed to polar residues over residues 391 to 407 (MSDS…TMSD) and 458 to 467 (AEISQPQVAR). Residues 481-495 (SENDKRSDSKRRGPR) show a composition bias toward basic and acidic residues.

The protein belongs to the MDM34 family. As to quaternary structure, component of the ER-mitochondria encounter structure (ERMES) or MDM complex, composed of MMM1, MDM10, MDM12 and MDM34.

It is found in the mitochondrion outer membrane. Its function is as follows. Component of the ERMES/MDM complex, which serves as a molecular tether to connect the endoplasmic reticulum (ER) and mitochondria. Components of this complex are involved in the control of mitochondrial shape and protein biogenesis, and function in nonvesicular lipid trafficking between the ER and mitochondria. MDM34 is required for the interaction of the ER-resident membrane protein MMM1 and the outer mitochondrial membrane-resident beta-barrel protein MDM10. This chain is Mitochondrial distribution and morphology protein 34, found in Pyricularia oryzae (strain 70-15 / ATCC MYA-4617 / FGSC 8958) (Rice blast fungus).